We begin with the raw amino-acid sequence, 622 residues long: Lamin Dm0 (622 aa).

The tract at residues 1–50 is disordered; it reads MSSKSRRAGTATPQPGNTSTPRPPSAGPQPPPPSTHSQTASSPLSPTRHS. The residue at position 2 (serine 2) is an N-acetylserine. The segment at 2–56 is head; sequence SSKSRRAGTATPQPGNTSTPRPPSAGPQPPPPSTHSQTASSPLSPTRHSRVAEKV. Residues threonine 10, threonine 12, and threonine 20 each carry the phosphothreonine modification. Over residues 21 to 34 the composition is skewed to pro residues; sequence PRPPSAGPQPPPPS. Phosphoserine occurs at positions 25 and 34. Phosphothreonine is present on threonine 39. Serine 41, serine 42, and serine 45 each carry phosphoserine. Threonine 47 bears the Phosphothreonine mark. Residues 54–410 enclose the IF rod domain; sequence EKVELQNLND…KLLVGEEARL (357 aa). A coil 1A region spans residues 55–91; sequence KVELQNLNDRLATYIDRVRNLETENSRLTIEVQTTRD. The segment at 92–103 is linker 1; the sequence is TVTRETTNIKNI. The segment at 104–241 is coil 1B; that stretch reads FEAELLETRR…QIHSQEINES (138 aa). At serine 235 the chain carries Phosphoserine. Positions 242–265 are linker 2; that stretch reads RRIKQTEYSEIDGRLSSEYDAKLK. Phosphotyrosine is present on tyrosine 249. Phosphoserine occurs at positions 250 and 311. The segment at 266–408 is coil 2; it reads QSLQELRAQY…YDKLLVGEEA (143 aa). The segment at 409–619 is tail; sequence RLNITPATNT…GDPQQSNEKC (211 aa). 2 positions are modified to phosphothreonine: threonine 413 and threonine 435. Over residues 429 to 440 the composition is skewed to polar residues; sequence RNSTRATPSRRT. A disordered region spans residues 429–448; that stretch reads RNSTRATPSRRTPSAAVKRK. Serine 442 carries the post-translational modification Phosphoserine. Residues 446–451 carry the Nuclear localization signal motif; the sequence is KRKRAV. Phosphoserine occurs at positions 455 and 459. The region spanning 461-588 is the LTD domain; that stretch reads ADYYVSASAK…RIVSQHTSSS (128 aa). Serine 595 bears the Phosphoserine mark. Threonine 597 bears the Phosphothreonine mark. The interval 603 to 622 is disordered; sequence EQLYHQQGDPQQSNEKCAIM. A compositionally biased stretch (polar residues) spans 605–622; that stretch reads LYHQQGDPQQSNEKCAIM. Residue serine 615 is modified to Phosphoserine. Cysteine 619 is subject to Cysteine methyl ester. A lipid anchor (S-farnesyl cysteine) is attached at cysteine 619. Positions 620-622 are cleaved as a propeptide — removed in mature form; the sequence is AIM.

The protein belongs to the intermediate filament family. Interacts directly with LBR. Interacts with MAN1. Interacts with Ote. Three forms of lamin have been identified in D.melanogaster, lamin Dm0 is rapidly processed to lamin Dm1 in the cytoplasm, Dm1 is then assembled in the nuclear envelope and is then phosphorylated, forming lamin Dm2. As to expression, constitutively expressed in all tissues (at protein level). Expressed in spermatocytes (at protein level).

It localises to the nucleus. It is found in the nucleus inner membrane. Its subcellular location is the nucleus envelope. The protein localises to the nucleus lamina. The protein resides in the cytoplasm. It localises to the cytoskeleton. It is found in the spindle pole. Its function is as follows. Lamins are components of the nuclear lamina, a fibrous layer on the nucleoplasmic side of the inner nuclear membrane, which is thought to provide a framework for the nuclear envelope and may also interact with chromatin. May have a role in the localization of the LEM domain proteins Ote, bocks and MAN1 to the nuclear membrane. In spermatocytes, plays a role in maintaining type-A lamin LamC nuclear localization; regulates meiotic cytokinesis by maintaining the structure of the spindle envelope, and by contributing to the formation of the contractile ring and central spindle. Required for nuclear migration and to link the microtubule organizing center (MTOC) to the nucleus. In addition, is required for nuclear envelope localization of klar. The protein is Lamin Dm0 of Drosophila melanogaster (Fruit fly).